A 671-amino-acid chain; its full sequence is Preterminal protein (671 aa).

Positions 380 to 389 (RLPVRRRRRR) match the Nuclear localization signal motif. Positions 386-411 (RRRRVPPPPPPPEEEEGEALMEEEIE) are disordered. Acidic residues predominate over residues 397–411 (PEEEEGEALMEEEIE). S580 carries the post-translational modification O-(5'-phospho-DNA)-serine. Positions 645 to 671 (GADVPLPPLPAGPEPPLPPGARPRHRF) are disordered. The segment covering 649–665 (PLPPLPAGPEPPLPPGA) has biased composition (pro residues).

The protein belongs to the adenoviridae terminal protein family. In terms of assembly, heterodimer with the polymerase; this heterodimer binds to bp 9 to 18 of the genome. Interacts with host POU2F1; POU2F1 binds to the auxiliary sequences in the inverted terminal repeats and tethers the pTP-POL heterodimer to the origin DNA thereby participating in the assembly of the pre-initiation complex (POL-TP-DBP-NFIA-POU2F1). Preterminal protein is used to replicate viral genome, upon genomic encapsidation it is processed first into iTP and finally into TP by adenovirus protease.

Its subcellular location is the host nucleus matrix. In terms of biological role, protein covalently bound to the viral DNA that acts as a primer for viral genomic replication by DNA strand displacement. Assembles on the viral origin of replication in an initiation complex with viral polymerase, DBP, host NFIA and host POU2F1/OCT1. During initiation, the polymerase covalently couples the first dCTP with Ser-580 of pTP. The terminal protein stimulates the template activity over 20 fold compared to protein-free templates. Neo-synthesized viral genomes are linked to two preterminal proteins, one for each 5' end. These new genomes are encapsidated in the nucleus, and during capsid maturation by viral protease, preterminal protein is first cleaved into intermediary (iTP), then into mature TP. May play a role in host nuclear matrix localization of genomic DNA. The chain is Preterminal protein from Human adenovirus C serotype 5 (HAdV-5).